A 50-amino-acid polypeptide reads, in one-letter code: Protein hunchback (50 aa).

3 C2H2-type zinc fingers span residues 1 to 5, 11 to 33, and 39 to 50; these read HLRNH, FKCN…MKSH, and YRCADCTYATKY.

It belongs to the hunchback C2H2-type zinc-finger protein family.

The protein resides in the nucleus. Functionally, gap class segmentation protein that controls development of head structures. This Platynereis dumerilii (Dumeril's clam worm) protein is Protein hunchback (hb).